A 41-amino-acid chain; its full sequence is uncharacterized protein (41 aa).

Its subcellular location is the plastid. It is found in the chloroplast. This is an uncharacterized protein from Trieres chinensis (Marine centric diatom).